Here is a 226-residue protein sequence, read N- to C-terminus: 6-deoxy-6-sulfo-D-fructose transaldolase (226 aa).

Catalysis depends on K89, which acts as the Schiff-base intermediate with substrate.

The protein belongs to the transaldolase family.

It catalyses the reaction 6-deoxy-6-sulfo-D-fructose + D-glyceraldehyde 3-phosphate = D-fructose 6-phosphate + (2S)-3-sulfolactaldehyde. The enzyme catalyses 6-deoxy-6-sulfo-D-fructose + D-erythrose 4-phosphate = (2S)-3-sulfolactaldehyde + D-sedoheptulose 7-phosphate. In terms of biological role, part of the sulfo-TAL (or sulfo-SFT) pathway, a D-sulfoquinovose degradation pathway that produces sulfolactate (SL). Catalyzes the conversion of 6-deoxy-6-sulfo-D-fructose (SF) and glyceraldehyde 3-phosphate (GAP) into fructose-6-phosphate (F6P) and 3-sulfolactaldehyde (SLA). Can also catalyze the SF-cleavage with erythrose 4-phosphate (E4P) as acceptor, forming 3-sulfolactaldehyde (SLA) and sedoheptulose 7-phosphate (S7P). In Priestia aryabhattai (Bacillus aryabhattai), this protein is 6-deoxy-6-sulfo-D-fructose transaldolase.